The primary structure comprises 131 residues: Insulin-like 3 (131 aa).

The first 26 residues, 1 to 26 (MDPHPLTWALVLLGPALALSRAPAPA), serve as a signal peptide directing secretion. Cystine bridges form between Cys-34-Cys-116, Cys-46-Cys-129, and Cys-115-Cys-120. The propeptide at 58–103 (AVAGGDRELLQWLEGQHLFHGLMASGDPMLVLAPQPPPQASGHHHH) is c peptide like.

It belongs to the insulin family. As to quaternary structure, heterodimer of a B chain and an A chain linked by two disulfide bonds. In terms of tissue distribution, expressed exclusively in prenatal and postnatal Leydig cells.

The protein localises to the secreted. Its function is as follows. Seems to play a role in testicular function. May be a trophic hormone with a role in testicular descent in fetal life. Is a ligand for LGR8 receptor. The polypeptide is Insulin-like 3 (INSL3) (Sus scrofa (Pig)).